The following is a 312-amino-acid chain: Ribosomal protein L11 methyltransferase (312 aa).

Positions 162, 183, 205, and 248 each coordinate S-adenosyl-L-methionine.

This sequence belongs to the methyltransferase superfamily. PrmA family.

The protein resides in the cytoplasm. The catalysed reaction is L-lysyl-[protein] + 3 S-adenosyl-L-methionine = N(6),N(6),N(6)-trimethyl-L-lysyl-[protein] + 3 S-adenosyl-L-homocysteine + 3 H(+). Its function is as follows. Methylates ribosomal protein L11. The sequence is that of Ribosomal protein L11 methyltransferase from Bacillus cytotoxicus (strain DSM 22905 / CIP 110041 / 391-98 / NVH 391-98).